The primary structure comprises 403 residues: NADH-quinone oxidoreductase subunit D (403 aa).

The protein belongs to the complex I 49 kDa subunit family. As to quaternary structure, NDH-1 is composed of 14 different subunits. Subunits NuoB, C, D, E, F, and G constitute the peripheral sector of the complex.

Its subcellular location is the cell inner membrane. It catalyses the reaction a quinone + NADH + 5 H(+)(in) = a quinol + NAD(+) + 4 H(+)(out). Its function is as follows. NDH-1 shuttles electrons from NADH, via FMN and iron-sulfur (Fe-S) centers, to quinones in the respiratory chain. The immediate electron acceptor for the enzyme in this species is believed to be ubiquinone. Couples the redox reaction to proton translocation (for every two electrons transferred, four hydrogen ions are translocated across the cytoplasmic membrane), and thus conserves the redox energy in a proton gradient. This chain is NADH-quinone oxidoreductase subunit D, found in Ruegeria sp. (strain TM1040) (Silicibacter sp.).